Reading from the N-terminus, the 160-residue chain is ATP synthase subunit b, chloroplastic (160 aa).

A helical transmembrane segment spans residues 12 to 31 (NVINIAILVVILIRFARQVV).

This sequence belongs to the ATPase B chain family. As to quaternary structure, F-type ATPases have 2 components, F(1) - the catalytic core - and F(0) - the membrane proton channel. F(1) has five subunits: alpha(3), beta(3), gamma(1), delta(1), epsilon(1). F(0) has four main subunits: a(1), b(1), b'(1) and c(10-14). The alpha and beta chains form an alternating ring which encloses part of the gamma chain. F(1) is attached to F(0) by a central stalk formed by the gamma and epsilon chains, while a peripheral stalk is formed by the delta, b and b' chains.

It is found in the plastid. The protein localises to the chloroplast thylakoid membrane. In terms of biological role, f(1)F(0) ATP synthase produces ATP from ADP in the presence of a proton or sodium gradient. F-type ATPases consist of two structural domains, F(1) containing the extramembraneous catalytic core and F(0) containing the membrane proton channel, linked together by a central stalk and a peripheral stalk. During catalysis, ATP synthesis in the catalytic domain of F(1) is coupled via a rotary mechanism of the central stalk subunits to proton translocation. Functionally, component of the F(0) channel, it forms part of the peripheral stalk, linking F(1) to F(0). The sequence is that of ATP synthase subunit b, chloroplastic from Cyanidioschyzon merolae (strain NIES-3377 / 10D) (Unicellular red alga).